A 331-amino-acid polypeptide reads, in one-letter code: Porphobilinogen deaminase (331 aa).

Cys-248 is subject to S-(dipyrrolylmethanemethyl)cysteine. Residues 307–331 (QLLQAPKQTGEPHDPDRHDKGTGRP) are disordered. The span at 316-331 (GEPHDPDRHDKGTGRP) shows a compositional bias: basic and acidic residues.

The protein belongs to the HMBS family. As to quaternary structure, monomer. It depends on dipyrromethane as a cofactor.

It carries out the reaction 4 porphobilinogen + H2O = hydroxymethylbilane + 4 NH4(+). Its pathway is porphyrin-containing compound metabolism; protoporphyrin-IX biosynthesis; coproporphyrinogen-III from 5-aminolevulinate: step 2/4. Tetrapolymerization of the monopyrrole PBG into the hydroxymethylbilane pre-uroporphyrinogen in several discrete steps. The polypeptide is Porphobilinogen deaminase (Acidothermus cellulolyticus (strain ATCC 43068 / DSM 8971 / 11B)).